The sequence spans 54 residues: Apelin receptor early endogenous ligand (54 aa).

The N-terminal stretch at 1–25 is a signal peptide; the sequence is MRFQPLFWVFFIFAMSLLFITEEKS.

This sequence belongs to the Elabela/Toddler family. In terms of assembly, interacts with APLNR.

It localises to the secreted. The protein resides in the extracellular space. Its function is as follows. Peptide hormone that functions as endogenous ligand for the G-protein-coupled apelin receptor (APLNR/APJ), that plays a role in the regulation of normal cardiovascular function and fluid homeostasis. Functions as a balanced agonist activating both G(i) protein pathway and beta-arrestin pathway of APLNR. Downstream G proteins activation, apelin can inhibit cAMP production and activate key intracellular effectors such as ERKs. On the other hand, APLNR activation induces beta-arrestin recruitment to the membrane leading to desensitization and internalization of the receptor. Required for mesendodermal differentiation, blood vessels formation and heart morphogenesis during early development and for adult cardiovascular homeostasis. Acts as a motogen by promoting mesendodermal cell migration during gastrulation by binding and activating APLNR. Acts as an early embryonic regulator of cellular movement with a role in migration and development of cardiac progenitor cells. May act as a chemoattractant for the activation of angioblast migration toward the embryonic midline, i.e. the position of the future vessel formation, during vasculogenesis. Positively regulates sinus venosus (SV)-derived endothelial cells migration into the developing heart to promote coronary blood vessel sprouting. Plays a role in placental vascular development; promotes placental trophoblast invasion and spiral artery remodeling in the uterus. Involved in the regulation of maternal cardiovascular homeostasis to prevent gestational hypertension and for potent cardioprotective functions during heart failure. Mediates myocardial contractility in an ERK1/2-dependent manner. The sequence is that of Apelin receptor early endogenous ligand from Rattus norvegicus (Rat).